We begin with the raw amino-acid sequence, 447 residues long: Signal recognition particle 54 kDa protein (447 aa).

GTP-binding positions include 105–112 (GVQGSGKT), 187–191 (DTAGR), and 247–250 (TKMD).

The protein belongs to the GTP-binding SRP family. SRP54 subfamily. In terms of assembly, part of the signal recognition particle protein translocation system, which is composed of SRP and FtsY. Archaeal SRP consists of a 7S RNA molecule of 300 nucleotides and two protein subunits: SRP54 and SRP19.

The protein resides in the cytoplasm. The catalysed reaction is GTP + H2O = GDP + phosphate + H(+). Its function is as follows. Involved in targeting and insertion of nascent membrane proteins into the cytoplasmic membrane. Binds to the hydrophobic signal sequence of the ribosome-nascent chain (RNC) as it emerges from the ribosomes. The SRP-RNC complex is then targeted to the cytoplasmic membrane where it interacts with the SRP receptor FtsY. The protein is Signal recognition particle 54 kDa protein of Hyperthermus butylicus (strain DSM 5456 / JCM 9403 / PLM1-5).